Here is a 491-residue protein sequence, read N- to C-terminus: GTPase Der (491 aa).

In terms of domain architecture, EngA-type G 1 spans 3 to 178 (AKIALVGRPN…EMRDLLPEED (176 aa)). GTP contacts are provided by residues 9 to 16 (GRPNVGKS), 57 to 61 (DTGGI), and 130 to 133 (NKVD). The span at 198–224 (DAETEDGASASETEEDITEETVEDEPE) shows a compositional bias: acidic residues. Positions 198–225 (DAETEDGASASETEEDITEETVEDEPEA) are disordered. The 174-residue stretch at 227 to 400 (LRLCMLGRPN…LAARIRRECS (174 aa)) folds into the EngA-type G 2 domain. GTP is bound by residues 233–240 (GRPNAGKS), 280–284 (DTAGV), and 345–348 (NKMD). Positions 401–485 (VRIPTGQLNR…PMRVHFRSSH (85 aa)) constitute a KH-like domain.

This sequence belongs to the TRAFAC class TrmE-Era-EngA-EngB-Septin-like GTPase superfamily. EngA (Der) GTPase family. Associates with the 50S ribosomal subunit.

GTPase that plays an essential role in the late steps of ribosome biogenesis. The protein is GTPase Der of Nitratidesulfovibrio vulgaris (strain ATCC 29579 / DSM 644 / CCUG 34227 / NCIMB 8303 / VKM B-1760 / Hildenborough) (Desulfovibrio vulgaris).